Reading from the N-terminus, the 334-residue chain is Serine/Arginine-related protein 53 (334 aa).

The span at 1 to 13 (MGRRSSDTEEESR) shows a compositional bias: basic and acidic residues. 3 disordered regions span residues 1–179 (MGRR…HLPP), 201–220 (LKAK…EDQA), and 243–290 (QTFR…SIPT). Basic residues-rich tracts occupy residues 14–24 (SKRKKKHRRRS) and 35–50 (YSRK…KSRS). The span at 51–62 (WSRDLQPRSHSY) shows a compositional bias: basic and acidic residues. The segment covering 78–118 (SRRKRSRSRSRGRGKSYRVQRSRSKSRTRRSRSRPRLRSHS) has biased composition (basic residues). 3 stretches are compositionally biased toward basic and acidic residues: residues 132–166 (RSRD…KRGE), 201–218 (LKAK…KEED), and 247–259 (SSKE…EPSE). Positions 180–236 (AEQAKARLQLVLEAAAKADEALKAKERNEEEAKRRKEEDQATLVEQVKRVKEIEAIE) form a coiled coil.

In terms of assembly, interacts (via Arg/Ser-rich domain) with LUC7L3, RBM39 and RSF1. Phosphorylated. In terms of tissue distribution, widely expressed. Expressed in brain, spinal cord, cerebellum.

The protein resides in the nucleus. It localises to the nucleus speckle. It is found in the cytoplasm. In terms of biological role, has a role in alternative splicing and transcription regulation. Involved in both constitutive and alternative pre-mRNA splicing. May have a role in the recognition of the 3' splice site during the second step of splicing. This is Serine/Arginine-related protein 53 (RSRC1) from Homo sapiens (Human).